A 143-amino-acid polypeptide reads, in one-letter code: MTEQVKKRPSPRRRARECAVQALYSFQISQNPVETVELSFVTDQDMKGVDMPYFRKLFRQTVENIPSVDSTMAPYLDRSANELDPIEKAILRLAVYELKYELDVPYKVVINEAIEVAKTFGAEDSHKYINGVLDKIAPALARK.

Belongs to the NusB family.

In terms of biological role, involved in transcription antitermination. Required for transcription of ribosomal RNA (rRNA) genes. Binds specifically to the boxA antiterminator sequence of the ribosomal RNA (rrn) operons. The polypeptide is Transcription antitermination protein NusB (Mannheimia succiniciproducens (strain KCTC 0769BP / MBEL55E)).